Consider the following 493-residue polypeptide: MRDPVFLLGFWSLYCCFPAGSLTTLRPQGSLRDEHHKPTGVPVTITTKPSVTFNIRTSKDPEHEGCNLSLGDSKLLENCGFNMTAKTFFIIHGWTMSGMFESWLHKLVSALQTREKEANVVVVDWLPLAHQLYIDAVSNTRVVGRRVAGMLNWLQEKGEFSLGDVHLIGYSLGAHVAGYAGNFVKGTVGRITGLDPAGPMFEGVDINRRLSPDDADFVDVLHTYTLSFGLSIGIRMPVGHIDIYPNGGDFQPGCGFNDVMGSFAYGTISEMVKCEHERAVHLFVDSLVNQDKPSFAFQCTDPNRFKRGICLSCRKNRCNNIGYNAKKMRKKRNSKMYLKTRAGMPFRVYHYQLKVHMFSYKNSGDIQPDLYITLYGSNADSQNLPLEIVEKIELNATNTFLVYTEEYLGDLFKIRLTWEGVSSSWYNLWNEFRSYLSQPSSPSRELHIRRIRVKSGETQRKVAFCVQDPMKNSISPGQELWFYKCQNDCRVKN.

The signal sequence occupies residues Met1–Thr23. A disulfide bridge links Cys66 with Cys79. N-linked (GlcNAc...) asparagine glycosylation is found at Asn67 and Asn82. Ser171 acts as the Nucleophile in catalysis. The active-site Charge relay system is the Asp195. Cys254 and Cys274 are oxidised to a cystine. The active-site Charge relay system is the His276. Cystine bridges form between Cys299/Cys318 and Cys310/Cys313. Lys327 to Lys339 serves as a coordination point for heparin. The region spanning Tyr349–Lys484 is the PLAT domain. Asn395 carries N-linked (GlcNAc...) asparagine glycosylation. A disulfide bridge links Cys465 with Cys485.

It belongs to the AB hydrolase superfamily. Lipase family. As to quaternary structure, head to tail Homodimer. Interacts with apolipoprotein C-2.

It is found in the secreted. It catalyses the reaction a triacylglycerol + H2O = a diacylglycerol + a fatty acid + H(+). The enzyme catalyses a 1,2-diacyl-sn-glycero-3-phosphocholine + H2O = a 2-acyl-sn-glycero-3-phosphocholine + a fatty acid + H(+). The catalysed reaction is 1,2,3-tri-(9Z-octadecenoyl)-glycerol + H2O = di-(9Z)-octadecenoylglycerol + (9Z)-octadecenoate + H(+). It carries out the reaction 1,2,3-tributanoylglycerol + H2O = dibutanoylglycerol + butanoate + H(+). It catalyses the reaction 1,2-dihexadecanoyl-sn-glycero-3-phosphocholine + H2O = hexadecanoyl-sn-glycero-3-phosphocholine + hexadecanoate + H(+). Its function is as follows. Exerts both phospholipase and triglyceride lipase activities. More active as a phospholipase than a triglyceride lipase. Hydrolyzes triglycerides, both with short-chain fatty acyl groups (tributyrin) and long-chain fatty acyl groups (triolein) with similar levels of activity toward both types of substrates. Hydrolyzes high density lipoproteins (HDL) more efficiently than other lipoproteins. This is Endothelial lipase (Lipg) from Rattus norvegicus (Rat).